Reading from the N-terminus, the 332-residue chain is Nuclear hormone receptor family member nhr-9 (332 aa).

The segment at residues 11–85 is a DNA-binding region (nuclear receptor); it reads ERRCAICSKL…MGMRIVTNQY (75 aa). 2 NR C4-type zinc fingers span residues 14–34 and 50–73; these read CAIC…CNAC and CINN…YNKC. Residues 101 to 332 enclose the NR LBD domain; that stretch reads DRSNKLMNFQ…KRLCAELLGA (232 aa).

It belongs to the nuclear hormone receptor family.

The protein localises to the nucleus. Functionally, orphan nuclear receptor. This Caenorhabditis elegans protein is Nuclear hormone receptor family member nhr-9 (nhr-9).